We begin with the raw amino-acid sequence, 841 residues long: MPLRRFSPGLKAQFAFGMVFLFVQPDASAADISAQQIGGVIIPQAFSQALQDGMSVPLYIHLAGSQGRQDDQRIGSAFIWLDDGQLRIRKIQLEESEDNASVSEQTRQQLMTLANAPFNEALTIPLTDNAQLDLSLRQLLLQLVVKREALGTVLRSRSEDIGQSSVNTLSSNLSYNFGVYNNQLRNGGSNTSSYLSLNNVTALREHHVVLDGSLYGIGSGQQDSELYKAMYERDFAGHRFAGGMLDTWNLQSLGPMTAISAGKIYGLSWGNQASSTIFDSSQSATPVIAFLPAAGEVHLTRDGRLLSVQNFTMGNHEVDTRGLPYGIYDVEVEVIVNGRVISKRTQRVNKLFSRGRGVGAPLAWQIWGGSFHMDRWSENGKKTRPAKESWLAGASTSGSLSTFSWAATGYGYDNQAVGETRLTLPLGVAINVNLQNMLASDSSWSNIASISATLPGGFSSLWVNQEKTRIGNQLRRSDADNRAIGGTLNLNSLWSKLGTFSISYNDDRRYNSHYYTADYYQSVYSGTFGSLGLRAGIQRYNNGDSSANTGKYIALDLSLPLGNWFSAGMTHQNGYTMANLSARKQFDEGTIRTVGANLSRAISGDTGDDKTLSGGAYAQFDARYASGTLNVNSAADGYINTNLTANGSVGWQGKNIAASGRTDGNAGVIFDTGLENDGQISAKINGRIFPLNGKRNYLPLSPYGRYEVELQNSKNSLDSYDIVSGRKSHLTLYPGNVAVIEPEVKQMVTVSGRIRAEDGTLLANARINNHIGRTRTDENGEFVMDVDKKYPTIDFRYSGNKTCEVALELNQARGAVWVGDVVCSGLSSWAAVTQTGEENES.

The first 29 residues, methionine 1–alanine 29, serve as a signal peptide directing secretion.

This sequence belongs to the EcpC/MatD family.

Its function is as follows. Part of the ecpRABCDE operon, which encodes the E.coli common pilus (ECP). ECP is found in both commensal and pathogenic strains and plays a dual role in early-stage biofilm development and host cell recognition. The chain is Probable outer membrane usher protein EcpC (ecpC) from Escherichia coli O127:H6 (strain E2348/69 / EPEC).